Reading from the N-terminus, the 527-residue chain is Serine/threonine-protein kinase NLK (527 aa).

Sufficient for interaction with DAPK3 stretches follow at residues 1-125 (MSLC…KAHH) and 124-416 (HHHQ…SKRI). Required for interaction with TAB2 stretches follow at residues 1–304 (MSLC…VVTQ) and 434–527 (YHTC…LVWE). Disordered regions lie at residues 22-72 (AAAA…SSAA) and 90-139 (QQPY…LDIE). Over residues 26–54 (GHHHHHHHHLPHLPPPHLHHHHHPQHHLH) the composition is skewed to basic residues. The segment covering 103 to 119 (PGPAAAAPAQVQAAAAA) has biased composition (low complexity). Over residues 122-131 (KAHHHQHSHH) the composition is skewed to basic residues. The 290-residue stretch at 138-427 (IEPDRPIGYG…AKDALAHPYL (290 aa)) folds into the Protein kinase domain. ATP-binding positions include 144–152 (IGYGAFGVV) and K167. D264 functions as the Proton acceptor in the catalytic mechanism. T298 is subject to Phosphothreonine; by autocatalysis. The TQE signature appears at 298 to 300 (TQE). The interval 428-527 (DEGRLRYHTC…EMPPSPLVWE (100 aa)) is required for homodimerization and kinase activation and localization to the nucleus. Phosphoserine is present on S522.

This sequence belongs to the protein kinase superfamily. CMGC Ser/Thr protein kinase family. MAP kinase subfamily. Homodimer. Homodimerization is required for intermolecular autophosphorylation, kinase activation and nuclear localization. Interacts with RNF138/NARF. Interacts with FOXO1 and FOXO3. Interacts with the upstream activating kinases HIPK2 and MAP3K7/TAK1. Interaction with MAP3K7/TAK1 seems to be indirect, and may be mediated by other proteins such as STAT3, TAB1 and TAB2. Interacts with and phosphorylates a number of transcription factors including FOXO4, LEF1, MYB, MYBL1, MYBL2, NOTCH1 and TCF7L2/TCF4. May interact with components of cullin-RING-based SCF (SKP1-CUL1-F-box protein) E3 ubiquitin-protein ligase complexes. Interacts with MEF2A. Interacts with ATF5; the interaction stabilizes ATF5 at the protein level in a kinase-independent manner. Mg(2+) is required as a cofactor. In terms of processing, phosphorylated on Thr-298. Intermolecular autophosphorylation on Thr-298 activates the enzyme. As to expression, expressed at high levels in the brain, and at lower levels in heart, kidney, lung and liver.

Its subcellular location is the nucleus. The protein localises to the cytoplasm. The enzyme catalyses L-seryl-[protein] + ATP = O-phospho-L-seryl-[protein] + ADP + H(+). The catalysed reaction is L-threonyl-[protein] + ATP = O-phospho-L-threonyl-[protein] + ADP + H(+). Its activity is regulated as follows. Activated by the non-canonical Wnt signaling pathway, in which WNT5A leads to activation of MAP3K7/TAK1 and HIPK2, which subsequently phosphorylates and activates this protein. Activated by dimerization and subsequent intermolecular autophosphorylation on Thr-298. Other cytokines such as IL6 may also activate this regulatory circuit. Its function is as follows. Serine/threonine-protein kinase that regulates a number of transcription factors with key roles in cell fate determination. Positive effector of the non-canonical Wnt signaling pathway, acting downstream of WNT5A, MAP3K7/TAK1 and HIPK2. Negative regulator of the canonical Wnt/beta-catenin signaling pathway. Binds to and phosphorylates TCF7L2/TCF4 and LEF1, promoting the dissociation of the TCF7L2/LEF1/beta-catenin complex from DNA, as well as the ubiquitination and subsequent proteolysis of LEF1. Together these effects inhibit the transcriptional activation of canonical Wnt/beta-catenin target genes. Negative regulator of the Notch signaling pathway. Binds to and phosphorylates NOTCH1, thereby preventing the formation of a transcriptionally active ternary complex of NOTCH1, RBPJ/RBPSUH and MAML1. Negative regulator of the MYB family of transcription factors. Phosphorylation of MYB leads to its subsequent proteolysis while phosphorylation of MYBL1 and MYBL2 inhibits their interaction with the coactivator CREBBP. Other transcription factors may also be inhibited by direct phosphorylation of CREBBP itself. Acts downstream of IL6 and MAP3K7/TAK1 to phosphorylate STAT3, which is in turn required for activation of NLK by MAP3K7/TAK1. Upon IL1B stimulus, cooperates with ATF5 to activate the transactivation activity of C/EBP subfamily members. Phosphorylates ATF5 but also stabilizes ATF5 protein levels in a kinase-independent manner. Acts as an inhibitor of the mTORC1 complex in response to osmotic stress by mediating phosphorylation of RPTOR, thereby preventing recruitment of the mTORC1 complex to lysosomes. The sequence is that of Serine/threonine-protein kinase NLK from Mus musculus (Mouse).